The sequence spans 507 residues: Proline--tRNA ligase (507 aa).

It belongs to the class-II aminoacyl-tRNA synthetase family. ProS type 3 subfamily. As to quaternary structure, homodimer.

It is found in the cytoplasm. The catalysed reaction is tRNA(Pro) + L-proline + ATP = L-prolyl-tRNA(Pro) + AMP + diphosphate. Its function is as follows. Catalyzes the attachment of proline to tRNA(Pro) in a two-step reaction: proline is first activated by ATP to form Pro-AMP and then transferred to the acceptor end of tRNA(Pro). This is Proline--tRNA ligase from Protochlamydia amoebophila (strain UWE25).